The following is a 357-amino-acid chain: MYPLVRRLLFLIPPEHAHKLVFAVLRGVAAVAPVRRLLRRLLGPTDPVLASTVFGVRFPAPLGLAAGFDKDGTALSSWGAMGFGYAEIGTVTAHPQPGNPAPRLFRLADDRALLNRMGFNNHGARALAIRLARHRPEIPIGVNIGKTKKTPAGDAVNDYRASARMVGPLASYLVVNVSSPNTPGLRDLQAVESLRPILSAVRAETSTPVLVKIAPDLSDSDLDDIADLAVELDLAGIVATNTTVSRDGLTTPGVDRLGPGGISGPPLAQRAVQVLRRLYDRVGDRLALISVGGIETADDAWERITAGASLLQGYTGFIYGGERWAKDIHEGIARRLHDGGFGSLHEAVGSARRRQPS.

Residues 66-70 and Thr-90 each bind FMN; that span reads AGFDK. A substrate-binding site is contributed by Lys-70. 115 to 119 is a binding site for substrate; it reads NRMGF. The FMN site is built by Asn-143 and Asn-176. Asn-176 is a binding site for substrate. Ser-179 functions as the Nucleophile in the catalytic mechanism. Asn-181 is a binding site for substrate. FMN contacts are provided by Lys-212 and Thr-240. 241–242 lines the substrate pocket; that stretch reads NT. FMN-binding positions include Gly-264, Gly-293, and 314–315; that span reads YT.

This sequence belongs to the dihydroorotate dehydrogenase family. Type 2 subfamily. In terms of assembly, monomer. FMN serves as cofactor.

It is found in the cell membrane. The catalysed reaction is (S)-dihydroorotate + a quinone = orotate + a quinol. Its pathway is pyrimidine metabolism; UMP biosynthesis via de novo pathway; orotate from (S)-dihydroorotate (quinone route): step 1/1. Functionally, catalyzes the conversion of dihydroorotate to orotate with quinone as electron acceptor. The protein is Dihydroorotate dehydrogenase (quinone) of Mycobacterium tuberculosis (strain ATCC 25177 / H37Ra).